The chain runs to 119 residues: Large ribosomal subunit protein bL20 (119 aa).

This sequence belongs to the bacterial ribosomal protein bL20 family.

In terms of biological role, binds directly to 23S ribosomal RNA and is necessary for the in vitro assembly process of the 50S ribosomal subunit. It is not involved in the protein synthesizing functions of that subunit. This is Large ribosomal subunit protein bL20 from Caldanaerobacter subterraneus subsp. tengcongensis (strain DSM 15242 / JCM 11007 / NBRC 100824 / MB4) (Thermoanaerobacter tengcongensis).